Consider the following 225-residue polypeptide: uncharacterized protein (225 aa).

The Fe2OG dioxygenase domain maps to 114–219 (DAEAIIMQVY…RLSVTMRRII (106 aa)).

This sequence belongs to the iron/ascorbate-dependent oxidoreductase family.

The protein localises to the cytoplasm. It localises to the nucleus. This is an uncharacterized protein from Schizosaccharomyces pombe (strain 972 / ATCC 24843) (Fission yeast).